The chain runs to 515 residues: Ribose import ATP-binding protein RbsA 1 (515 aa).

ABC transporter domains lie at 8–244 (FQME…IGRE) and 256–503 (VPAT…LNIH). 40 to 47 (GENGAGKS) lines the ATP pocket.

This sequence belongs to the ABC transporter superfamily. Ribose importer (TC 3.A.1.2.1) family. The complex is composed of an ATP-binding protein (RbsA), two transmembrane proteins (RbsC) and a solute-binding protein (RbsB).

It localises to the cell inner membrane. It catalyses the reaction D-ribose(out) + ATP + H2O = D-ribose(in) + ADP + phosphate + H(+). Part of the ABC transporter complex RbsABC involved in ribose import. Responsible for energy coupling to the transport system. The polypeptide is Ribose import ATP-binding protein RbsA 1 (Mesorhizobium japonicum (strain LMG 29417 / CECT 9101 / MAFF 303099) (Mesorhizobium loti (strain MAFF 303099))).